The following is a 469-amino-acid chain: Neuraminidase (469 aa).

Residues 1-12 (MNTNQRIITIGT) are Intravirion-facing. The segment at 11 to 33 (GTICLIVGIISLLLQIGNIILLW) is involved in apical transport and lipid raft association. The helical transmembrane segment at 13-33 (ICLIVGIISLLLQIGNIILLW) threads the bilayer. At 34–469 (MSHSIQTGEK…GADLPFTIDK (436 aa)) the chain is on the virion surface side. The tract at residues 36-90 (HSIQTGEKSHPKVCNQSVITYENNTWVNQTYVNISNTNIAAGQGVTPIILAGNSS) is hypervariable stalk region. N-linked (GlcNAc...) asparagine; by host glycosylation is found at Asn-50, Asn-58, Asn-63, Asn-68, and Asn-88. The tract at residues 91–469 (LCPISGWAIY…GADLPFTIDK (379 aa)) is head of neuraminidase. 8 disulfide bridges follow: Cys-92/Cys-417, Cys-124/Cys-129, Cys-184/Cys-231, Cys-233/Cys-238, Cys-279/Cys-292, Cys-281/Cys-290, Cys-318/Cys-335, and Cys-421/Cys-446. Arg-118 is a binding site for substrate. Residue Asn-146 is glycosylated (N-linked (GlcNAc...) asparagine; by host). The Proton donor/acceptor role is filled by Asp-151. Position 152 (Arg-152) interacts with substrate. A glycan (N-linked (GlcNAc...) asparagine; by host) is linked at Asn-235. 277–278 (EE) is a substrate binding site. Arg-293 is a binding site for substrate. Residues Asp-294, Asp-324, and Asn-344 each contribute to the Ca(2+) site. Arg-368 contributes to the substrate binding site. Tyr-402 acts as the Nucleophile in catalysis.

This sequence belongs to the glycosyl hydrolase 34 family. Homotetramer. Ca(2+) serves as cofactor. Post-translationally, N-glycosylated.

Its subcellular location is the virion membrane. It localises to the host apical cell membrane. It catalyses the reaction Hydrolysis of alpha-(2-&gt;3)-, alpha-(2-&gt;6)-, alpha-(2-&gt;8)- glycosidic linkages of terminal sialic acid residues in oligosaccharides, glycoproteins, glycolipids, colominic acid and synthetic substrates.. Inhibited by the neuraminidase inhibitors zanamivir (Relenza) and oseltamivir (Tamiflu). These drugs interfere with the release of progeny virus from infected cells and are effective against all influenza strains. Resistance to neuraminidase inhibitors is quite rare. In terms of biological role, catalyzes the removal of terminal sialic acid residues from viral and cellular glycoconjugates. Cleaves off the terminal sialic acids on the glycosylated HA during virus budding to facilitate virus release. Additionally helps virus spread through the circulation by further removing sialic acids from the cell surface. These cleavages prevent self-aggregation and ensure the efficient spread of the progeny virus from cell to cell. Otherwise, infection would be limited to one round of replication. Described as a receptor-destroying enzyme because it cleaves a terminal sialic acid from the cellular receptors. May facilitate viral invasion of the upper airways by cleaving the sialic acid moieties on the mucin of the airway epithelial cells. Likely to plays a role in the budding process through its association with lipid rafts during intracellular transport. May additionally display a raft-association independent effect on budding. Plays a role in the determination of host range restriction on replication and virulence. Sialidase activity in late endosome/lysosome traffic seems to enhance virus replication. This is Neuraminidase from Influenza A virus (strain A/New Jersey/8/1976 H1N1).